A 319-amino-acid chain; its full sequence is Triacylglycerol lipase (319 aa).

The 279-residue stretch at 10-288 (PVILVHGLAG…TSYHWNHLDE (279 aa)) folds into the AB hydrolase-1 domain. Substrate is bound at residue leucine 17. Catalysis depends on serine 87, which acts as the Nucleophile. Glutamine 88 is a binding site for substrate. Cysteine 190 and cysteine 269 are joined by a disulfide. Aspartate 241 is a Ca(2+) binding site. Residues aspartate 263 and histidine 285 each act as charge relay system in the active site. Ca(2+)-binding residues include aspartate 287, glutamine 291, and valine 295.

This sequence belongs to the AB hydrolase superfamily. Pseudomonas lipase family. Monomer. Interacts with lipase-specific foldase Lif. Ca(2+) serves as cofactor.

It localises to the secreted. It catalyses the reaction a triacylglycerol + H2O = a diacylglycerol + a fatty acid + H(+). In terms of biological role, catalyzes the hydrolysis of triacylglycerol. The polypeptide is Triacylglycerol lipase (Pseudarthrobacter phenanthrenivorans (Arthrobacter phenanthrenivorans)).